Here is a 3032-residue protein sequence, read N- to C-terminus: Compactin nonaketide synthase, polyketide synthase component (3032 aa).

Residues 8–447 (NEPIVVVGSG…GTNAHAIIEE (440 aa)) enclose the Ketosynthase family 3 (KS3) domain. Active-site for beta-ketoacyl synthase activity residues include C181, H320, and H367. Residues 560-901 (VFTGQGAQWP…GYIWERFGVR (342 aa)) are acyl and malonyl transferase. S654 acts as the For malonyltransferase activity in catalysis. Positions 953–1089 (HLLLGKLSSY…GQIVITLGEA (137 aa)) are N-terminal hotdog fold. Residues 953 to 1261 (HLLLGKLSSY…FKPFSPPTAS (309 aa)) enclose the PKS/mFAS DH domain. Catalysis depends on H985, which acts as the Proton acceptor; for dehydratase activity. Residues 985-997 (HALQGQTVFPAAG) form a dehydratase-like region. Residues 1106–1261 (MNNVNIDFFY…FKPFSPPTAS (156 aa)) are C-terminal hotdog fold. D1168 serves as the catalytic Proton donor; for dehydratase activity. Positions 1506 to 1544 (YDLIIASDVLHASSNFEEKLAHIRSLLKPGGHLVTFGVT) are methyltransferase. One can recognise a Carrier domain in the interval 2441–2520 (DQVRQIVIDG…DLADDAATRL (80 aa)). An O-(pantetheine 4'-phosphoryl)serine modification is found at S2480. Residues 2531-2580 (IGDSTGTSDSGASPTPTDSHDEASSATSTDASSAEEDEEQEDDNEQGGRK) are disordered. Low complexity predominate over residues 2532-2547 (GDSTGTSDSGASPTPT). A compositionally biased stretch (acidic residues) spans 2563 to 2575 (SAEEDEEQEDDNE). A peptide synthetase elongation region spans residues 2586–2946 (RLSLGQEYSW…PKTQTHAPLF (361 aa)).

The cofactor is pantetheine 4'-phosphate.

It carries out the reaction holo-[compactin nonaketide synthase] + 9 malonyl-CoA + 11 NADPH + 20 H(+) = dihydro-ML-236C-[compactin nonaketide synthase] + 9 CO2 + 11 NADP(+) + 9 CoA + 6 H2O. It functions in the pathway polyketide biosynthesis. In terms of biological role, nonaketide synthase; part of the gene cluster that mediates the biosynthesis of compactin, also known as mevastatin or ML-236B, and which acts as a potent competitive inhibitor of HMG-CoA reductase. Compactin biosynthesis is performed in two stages. The first stage is catalyzed by the nonaketide synthase mlcA, which belongs to type I polyketide synthases and catalyzes the iterative nine-step formation of the polyketide. This PKS stage is completed by the action of dehydrogenase mlcG, which catalyzes the NADPH-dependent reduction of the unsaturated tetra-, penta- and heptaketide intermediates that arise during the mlcA-mediated biosynthesis of the nonaketide chain and leads to dihydro-ML-236C carboxylate. Covalently bound dihydro-ML-236C carboxylate is released from mlcA by the mlcF esterase. Conversion of dihydro-ML-236C carboxylate into ML-236A carboxylate is subsequently performed with the participation of molecular oxygen and P450 monoogygenase mlcC. Finally, mlcH performs the conversion of ML-236A carboxylate to ML-236B/compactin carboxylate through the addition of the side-chain diketide moiety produced by the diketide synthase mlcB. This chain is Compactin nonaketide synthase, polyketide synthase component, found in Penicillium citrinum.